Reading from the N-terminus, the 453-residue chain is Ribulose bisphosphate carboxylase large chain (453 aa).

Positions 1-2 (MS) are excised as a propeptide. Proline 3 is subject to N-acetylproline. N6,N6,N6-trimethyllysine is present on lysine 14. Residues asparagine 123 and threonine 173 each coordinate substrate. Lysine 175 functions as the Proton acceptor in the catalytic mechanism. Position 177 (lysine 177) interacts with substrate. Residues lysine 201, aspartate 203, and glutamate 204 each coordinate Mg(2+). Lysine 201 bears the N6-carboxylysine mark. Residue histidine 294 is the Proton acceptor of the active site. Substrate contacts are provided by arginine 295, histidine 327, and serine 379.

This sequence belongs to the RuBisCO large chain family. Type I subfamily. Heterohexadecamer of 8 large chains and 8 small chains; disulfide-linked. The disulfide link is formed within the large subunit homodimers. Requires Mg(2+) as cofactor. In terms of processing, the disulfide bond which can form in the large chain dimeric partners within the hexadecamer appears to be associated with oxidative stress and protein turnover.

The protein resides in the plastid. It localises to the chloroplast. It carries out the reaction 2 (2R)-3-phosphoglycerate + 2 H(+) = D-ribulose 1,5-bisphosphate + CO2 + H2O. It catalyses the reaction D-ribulose 1,5-bisphosphate + O2 = 2-phosphoglycolate + (2R)-3-phosphoglycerate + 2 H(+). In terms of biological role, ruBisCO catalyzes two reactions: the carboxylation of D-ribulose 1,5-bisphosphate, the primary event in carbon dioxide fixation, as well as the oxidative fragmentation of the pentose substrate in the photorespiration process. Both reactions occur simultaneously and in competition at the same active site. The sequence is that of Ribulose bisphosphate carboxylase large chain from Rubia tinctorum (Madder).